Reading from the N-terminus, the 496-residue chain is Glutamyl-tRNA(Gln) amidotransferase subunit A (496 aa).

Catalysis depends on charge relay system residues Lys79 and Ser159. Ser183 acts as the Acyl-ester intermediate in catalysis.

Belongs to the amidase family. GatA subfamily. In terms of assembly, heterotrimer of A, B and C subunits.

It catalyses the reaction L-glutamyl-tRNA(Gln) + L-glutamine + ATP + H2O = L-glutaminyl-tRNA(Gln) + L-glutamate + ADP + phosphate + H(+). Its function is as follows. Allows the formation of correctly charged Gln-tRNA(Gln) through the transamidation of misacylated Glu-tRNA(Gln) in organisms which lack glutaminyl-tRNA synthetase. The reaction takes place in the presence of glutamine and ATP through an activated gamma-phospho-Glu-tRNA(Gln). This chain is Glutamyl-tRNA(Gln) amidotransferase subunit A, found in Ruegeria pomeroyi (strain ATCC 700808 / DSM 15171 / DSS-3) (Silicibacter pomeroyi).